The sequence spans 320 residues: Methionyl-tRNA formyltransferase (320 aa).

A (6S)-5,6,7,8-tetrahydrofolate-binding site is contributed by 111-114 (SLLP).

It belongs to the Fmt family.

It catalyses the reaction L-methionyl-tRNA(fMet) + (6R)-10-formyltetrahydrofolate = N-formyl-L-methionyl-tRNA(fMet) + (6S)-5,6,7,8-tetrahydrofolate + H(+). In terms of biological role, attaches a formyl group to the free amino group of methionyl-tRNA(fMet). The formyl group appears to play a dual role in the initiator identity of N-formylmethionyl-tRNA by promoting its recognition by IF2 and preventing the misappropriation of this tRNA by the elongation apparatus. This Pediococcus pentosaceus (strain ATCC 25745 / CCUG 21536 / LMG 10740 / 183-1w) protein is Methionyl-tRNA formyltransferase.